The chain runs to 89 residues: Bombyxin B-1 (89 aa).

Positions 1 to 19 are cleaved as a signal peptide; that stretch reads MKTSVMFMLVIVISLMCSG. Cystine bridges form between Cys29-Cys75, Cys41-Cys88, and Cys74-Cys79. A propeptide spans 48 to 66 (c peptide like); that stretch reads GGAQYAPYFWTRQYLGSRG.

This sequence belongs to the insulin family. In terms of assembly, heterodimer of a B chain and an A chain linked by two disulfide bonds.

Its subcellular location is the secreted. Its function is as follows. Brain peptide responsible for activation of prothoracic glands to produce ecdysone in insects. This Bombyx mori (Silk moth) protein is Bombyxin B-1 (BBXB1).